Consider the following 478-residue polypeptide: MYVLVLIHMCYHFTMKRKKLFVYFIFLSFIINFNFNININFVCSNVIQDVISIGNVDICVVNVNSDEAQECILNNEFGKLLLFVCNMNDAFSTTAKTHPENCPSRAFVNQSNPTENSPEVDTYSIYPNLFGTNENRLNDTYSLYSTPYSNMDIDFSCLCYGDKQDKVKHIMRINIKKTRKKIKGCDFGDNIPSKRDLTNSLSLNERSSCIIHAYSNDVLGINCFKKEINNSYNNNLELNPSNCFHDVYFGADLILNSKNVIPNSRVIPDPSSDVKLSRNHSFSSYLILPNNLTENIKISCTCKRDEFVGTMIIYTKNINSLMFDNNNNNNDEEQIFQNKYMKKKEYKKDEGNEYDKKMNTDDNYINNEEHHNNNQYNNYENKINNVNYNYDDISKYINEHYKNYDHEKNSKNSYKTNTNIHDQYDTYHYNNKYDLHSDRTRIRTRTFWQNLFGLSSSKYILFNNFLILFIFLIYIYST.

An N-terminal signal peptide occupies residues 1–41; that stretch reads MYVLVLIHMCYHFTMKRKKLFVYFIFLSFIINFNFNININF. 6-Cys domains are found at residues 42 to 178 and 181 to 326; these read VCSN…IKKT and KIKG…FDNN. Disulfide bonds link C59–C71, C85–C159, C102–C157, C185–C209, C223–C302, and C243–C300. 2 N-linked (GlcNAc...) asparagine glycosylation sites follow: N109 and N138. Residues N229, N279, and N291 are each glycosylated (N-linked (GlcNAc...) asparagine). A lipid anchor (GPI-anchor amidated serine) is attached at S455. Positions 456–478 are cleaved as a propeptide — removed in mature form; sequence SSKYILFNNFLILFIFLIYIYST.

It localises to the cell surface. The protein resides in the cell membrane. Involved in sporozoite infection of hepatocytes and replication therein. This Plasmodium falciparum (isolate 3D7) protein is Sporozoite surface protein P36p (PF52).